Reading from the N-terminus, the 834-residue chain is Transcription intermediary factor 1-beta (834 aa).

Ala-2 bears the N-acetylalanine mark. Residues 13–23 (AATAASAASGS) are compositionally biased toward low complexity. Residues 13–56 (AATAASAASGSPGSGEGSAGGEKRPAASSAAAASAAASSPAGGG) form a disordered region. Ser-23, Ser-26, and Ser-30 each carry phosphoserine. Lys-35 participates in a covalent cross-link: Glycyl lysine isopeptide (Lys-Gly) (interchain with G-Cter in SUMO2). A compositionally biased stretch (low complexity) spans 38–52 (AASSAAAASAAASSP). The residue at position 51 (Ser-51) is a Phosphoserine. An RING-type zinc finger spans residues 66 to 122 (CGVCRERLRPERDPRLLPCLHSACSACLGPATPAAANNSGDGGSAGDGAMVDCPVCK). A Glycyl lysine isopeptide (Lys-Gly) (interchain with G-Cter in SUMO2) cross-link involves residue Lys-128. At Ser-139 the chain carries Phosphoserine. The segment at 149 to 196 (DANQCCTSCEDNAPATSYCVECSEPLCETCVEAHQRVKYTKDHTVRST) adopts a B box-type 1 zinc-finger fold. The Zn(2+) site is built by Cys-154, Cys-157, Cys-178, and His-182. A Glycyl lysine isopeptide (Lys-Gly) (interchain with G-Cter in SUMO2) cross-link involves residue Lys-200. The B box-type 2 zinc-finger motif lies at 205–246 (ERTVYCNVHKHEPLVLFCESCDTLTCRDCQLNAHKDHQYQFL). Zn(2+) is bound by residues Cys-210, His-213, Cys-233, and His-238. The leucine zipper alpha helical coiled-coil region stretch occupies residues 247–377 (EDAVRNQRKL…LIYFQLHRAL (131 aa)). The segment at 248–377 (DAVRNQRKLL…LIYFQLHRAL (130 aa)) is interaction with MAGEC2. Glycyl lysine isopeptide (Lys-Gly) (interchain with G-Cter in SUMO2) cross-links involve residues Lys-255 and Lys-262. Lys-267 carries the post-translational modification N6-acetyllysine. Lys-273 participates in a covalent cross-link: Glycyl lysine isopeptide (Lys-Gly) (interchain with G-Cter in SUMO2). Lys-305 is modified (N6-acetyllysine; alternate). Residue Lys-305 forms a Glycyl lysine isopeptide (Lys-Gly) (interchain with G-Cter in SUMO2); alternate linkage. Residue Lys-320 forms a Glycyl lysine isopeptide (Lys-Gly) (interchain with G-Cter in SUMO2) linkage. Lys-341 is modified (N6-acetyllysine). Residue Lys-367 forms a Glycyl lysine isopeptide (Lys-Gly) (interchain with G-Cter in SUMO2) linkage. The segment at 367 to 371 (KLIYF) is involved in binding PPP1CA. Residue Lys-378 is modified to N6-acetyllysine; alternate. Lys-378 is covalently cross-linked (Glycyl lysine isopeptide (Lys-Gly) (interchain with G-Cter in SUMO2); alternate). Lys-378 is covalently cross-linked (Glycyl lysine isopeptide (Lys-Gly) (interchain with G-Cter in SUMO1); alternate). A Glycyl lysine isopeptide (Lys-Gly) (interchain with G-Cter in SUMO2) cross-link involves residue Lys-408. The segment at 412-480 (ERPGTNSTGP…SRSGEGEVSG (69 aa)) is disordered. At Ser-418 the chain carries Phosphoserine. Residue Lys-435 forms a Glycyl lysine isopeptide (Lys-Gly) (interchain with G-Cter in SUMO2) linkage. Over residues 435–444 (KQGSGSSQPM) the composition is skewed to polar residues. A phosphoserine mark is found at Ser-438, Ser-440, and Ser-454. A Glycyl lysine isopeptide (Lys-Gly) (interchain with G-Cter in SUMO2); alternate cross-link involves residue Lys-469. Residue Lys-469 forms a Glycyl lysine isopeptide (Lys-Gly) (interchain with G-Cter in SUMO1); alternate linkage. At Arg-470 the chain carries Citrulline. Ser-471 is modified (phosphoserine). A Citrulline modification is found at Arg-472. Ser-473, Ser-479, and Ser-489 each carry phosphoserine. An HP1 box region spans residues 476–513 (GEVSGLLRKVPRVSLERLDLDLTSDSQPPVFKVFPGST). Residues 481 to 494 (LLRKVPRVSLERLD) carry the PxVxL motif motif. Thr-498 carries the phosphothreonine modification. At Ser-501 the chain carries Phosphoserine. A Glycyl lysine isopeptide (Lys-Gly) (interchain with G-Cter in SUMO2) cross-link involves residue Lys-507. Lys-554 participates in a covalent cross-link: Glycyl lysine isopeptide (Lys-Gly) (interchain with G-Cter in SUMO2); alternate. Residue Lys-554 forms a Glycyl lysine isopeptide (Lys-Gly) (interchain with G-Cter in SUMO); alternate linkage. Lys-575 participates in a covalent cross-link: Glycyl lysine isopeptide (Lys-Gly) (interchain with G-Cter in SUMO2). The interval 581 to 602 (LTEGPGAEGPRLASPSGSTSSG) is disordered. Ser-594 is subject to Phosphoserine. The PHD-type zinc finger occupies 625 to 672 (ATICRVCQKPGDLVMCNQCEFCFHLDCHLPALQDVPGEEWSCSLCHVL). Lys-676 participates in a covalent cross-link: Glycyl lysine isopeptide (Lys-Gly) (interchain with G-Cter in SUMO). Phosphoserine occurs at positions 683, 689, and 697. The Bromo domain occupies 695–799 (KLSPANQRKC…RFFETRMNDA (105 aa)). Residue Lys-750 forms a Glycyl lysine isopeptide (Lys-Gly) (interchain with G-Cter in SUMO2); alternate linkage. Lys-750 participates in a covalent cross-link: Glycyl lysine isopeptide (Lys-Gly) (interchain with G-Cter in SUMO1); alternate. Lys-750 participates in a covalent cross-link: Glycyl lysine isopeptide (Lys-Gly) (interchain with G-Cter in SUMO); alternate. Ser-752 is subject to Phosphoserine. Residue Tyr-755 is modified to Phosphotyrosine. A Phosphoserine modification is found at Ser-757. An N6-acetyllysine; alternate mark is found at Lys-770, Lys-774, and Lys-779. Glycyl lysine isopeptide (Lys-Gly) (interchain with G-Cter in SUMO2); alternate cross-links involve residues Lys-770, Lys-774, and Lys-779. Lys-779 participates in a covalent cross-link: Glycyl lysine isopeptide (Lys-Gly) (interchain with G-Cter in SUMO1); alternate. Ser-784 carries the phosphoserine modification. Residue Lys-804 forms a Glycyl lysine isopeptide (Lys-Gly) (interchain with G-Cter in SUMO2) linkage. Residue Ser-824 is modified to Phosphoserine; by ATM and ATR and dsDNA kinase.

The protein belongs to the TRIM/RBCC family. Oligomer; the RBCC domain homotrimerizes and interacts with one molecule of KRAB to form the KRAB-KAP1 corepressor complex. Interacts with SETX. Binding to a KRAB domain is an absolute requirement for silencing gene expression. Interacts with a number of KRAB-ZFP proteins including ZNF10, ZFP53, ZFP68, ZNF382 and ZNF256. Interacts with NCOR1, NR3C1 and CHD3. Interacts with CEBPB (via the RING-type and PHD-type zinc fingers). Interacts with CBX5 (via the PxVxL motif); the interaction occurs in interphase nuclei and competes for binding POGZ. Interacts with POGZ; the interaction competes for interaction with CBX5. Interacts with SETDB1; the interaction is enhanced by KAP1 sumoylation, stimulates SETDB1 histone methyltransferase activity and gene silencing. Interacts (via the PHD-type zinc finger) with UBE2I; the interaction is required for sumoylation and repressor activity. Component of the TRIM28/KAP1-ERBB4-MDM2 complex involved in connecting growth factor and DNA damage responses. Interacts directly with ERBB4; the interaction represses ERBB4-mediated transcription activity. Interacts with MDM2; the interaction contributes to p53/TP53 inactivation. Component of the TRIM28/KAP1-MDM2-p53/TP53; involved in regulating p53/TP53 stabilization and activity. Interacts (via the leucine zipper alpha helical coiled-coil) with E2F1 (central region); the interaction inhibits E2F1 acetylation and transcriptional activity. Interacts with PPP1CA; the interaction dephosphorylates TRIM28 at Ser-824 and forms a complex at the p21 promoter site. Interacts with PPP1CB; the interaction is weak but is increased on dephosphorylation at Ser-824. Interacts with CEBPB and NR3C1. Interacts with CBX5 (via the PxVxL motif); the interaction occurs in interphase nuclei and competes for binding POGZ. Component of a ternary complex that includes TRIM28, a HP1 protein (CBX1, CBX3 OR CBX5), a KRAB domain-containing protein, and DNA. Interacts with SMARCAD1. Interacts with, and sumoylates IRF7. Interacts with MAGEC2. Part of a complex composed of TRIM28, HDAC1, HDAC2 and EHMT2. Interacts (via the RBCC domain) with KOX1 (via the KRAB domain), ZNF268 (via the KRAB domain) and ZNF300 (via the KRAB domain); the interactions increase KOX1, ZNF268 and ZNF300 nuclear localization activities. Interacts with AICDA. The large PER complex involved in the histone methylation is composed of at least PER2, CBX3, TRIM28, SUV39H1 and/or SUV39H2; CBX3 mediates the formation of the complex. Interacts with NR4A3; the interactions potentiates NR4A3 activity on NurRE promoter. Interacts (unphosphorylated or phosphorylated form) with ZBTB1 (via BTB domain). Probably part of a corepressor complex containing ZNF304, TRIM28, SETDB1 and DNMT1. Interacts with ATRX. Forms a complex with ATRX, SETDB1 and ZNF274. Interacts with ZFP568; the interaction mediates ZFP568 transcriptional repression activity. Interacts with RRP1B. Interacts with CRY1. Interacts with ZNF263; recruited to the SIX3 promoter along with other proteins involved in chromatin modification and transcriptional corepression where it contributes to transcriptional repression. Interacts with CYREN (via XLF motif). Interacts with TRIM17; this interaction prevents TRIM28 activity. Interacts with ZNF746. Interacts with PHF13. Interacts with ZNF354C. Interacts with ZNF432; the interaction is independent of PARP1. In terms of processing, ATM-induced phosphorylation on Ser-824 represses sumoylation leading to the de-repression of expression of a subset of genes involved in cell cycle control and apoptosis in response to genotoxic stress. Dephosphorylation by the phosphatases, PPP1CA and PP1CB forms, allows sumoylation and expression of TRIM28 target genes. Sumoylation/desumoylation events regulate TRIM28-mediated transcriptional repression. Sumoylation is required for interaction with CHD3 and SETDB1 and the corepressor activity. Represses and is repressed by Ser-824 phosphorylation. Enhances the TRIM28 corepressor activity, inhibiting transcriptional activity of a number of genes including GADD45A and CDKN1A/p21. Lys-554, Lys-779 and Lys-804 are the major sites of sumoylation. In response to Dox-induced DNA damage, enhanced phosphorylation on Ser-824 prevents sumoylation and allows de-repression of CDKN1A/p21. Post-translationally, auto-ubiquitinated; enhanced by MAGEA2 and MAGEC2. In terms of processing, citrullinated by PADI4. ADP-ribosylated by SIRT6, promoting TRIM28/KAP1 interaction with CBX5, thereby contributing to the packaging of LINE-1 retrotransposon elements into transcriptionally repressive heterochromatin.

The protein resides in the nucleus. The enzyme catalyses S-ubiquitinyl-[E2 ubiquitin-conjugating enzyme]-L-cysteine + [acceptor protein]-L-lysine = [E2 ubiquitin-conjugating enzyme]-L-cysteine + N(6)-ubiquitinyl-[acceptor protein]-L-lysine.. It participates in protein modification; protein sumoylation. Functionally, nuclear corepressor for KRAB domain-containing zinc finger proteins (KRAB-ZFPs). Mediates gene silencing by recruiting CHD3, a subunit of the nucleosome remodeling and deacetylation (NuRD) complex, and SETDB1 (which specifically methylates histone H3 at 'Lys-9' (H3K9me)) to the promoter regions of KRAB target genes. Enhances transcriptional repression by coordinating the increase in H3K9me, the decrease in histone H3 'Lys-9 and 'Lys-14' acetylation (H3K9ac and H3K14ac, respectively) and the disposition of HP1 proteins to silence gene expression. Recruitment of SETDB1 induces heterochromatinization. May play a role as a coactivator for CEBPB and NR3C1 in the transcriptional activation of ORM1. Also a corepressor for ERBB4. Inhibits E2F1 activity by stimulating E2F1-HDAC1 complex formation and inhibiting E2F1 acetylation. May serve as a partial backup to prevent E2F1-mediated apoptosis in the absence of RB1. Important regulator of CDKN1A/p21(CIP1). Has E3 SUMO-protein ligase activity toward itself via its PHD-type zinc finger. Specifically sumoylates IRF7, thereby inhibiting its transactivation activity. Ubiquitinates p53/TP53 leading to its proteasomal degradation; the function is enhanced by MAGEC2 and MAGEA2, and possibly MAGEA3 and MAGEA6. Mediates the nuclear localization of KOX1, ZNF268 and ZNF300 transcription factors. Probably forms a corepressor complex required for activated KRAS-mediated promoter hypermethylation and transcriptional silencing of tumor suppressor genes (TSGs) or other tumor-related genes in colorectal cancer (CRC) cells. Required to maintain a transcriptionally repressive state of genes in undifferentiated embryonic stem cells (ESCs). In ESCs, in collaboration with SETDB1, is also required for H3K9me3 and silencing of endogenous and introduced retroviruses in a DNA-methylation independent-pathway. Associates at promoter regions of tumor suppressor genes (TSGs) leading to their gene silencing. The SETDB1-TRIM28-ZNF274 complex may play a role in recruiting ATRX to the 3'-exons of zinc-finger coding genes with atypical chromatin signatures to establish or maintain/protect H3K9me3 at these transcriptionally active regions. Acts as a corepressor for ZFP568. The sequence is that of Transcription intermediary factor 1-beta from Mus musculus (Mouse).